The sequence spans 265 residues: MKPTILLYDSGMGGLTIYDAIRQTLPNAHYLYCFDNAYFPYSERSENVLIEQAVKIVQKIAEKYPLDMVVVACNTASTVVLPALREKFAFPIVGTVPAIKPAAAISQTKTIGLLATKGTVERPYVAELIEKYAKDCIVEKIGTTTLVELVEEKIRTGQVDQERLIEVIAEWQTHPTLDTVILGCTHFPLVKQELQQLLPNVKYFIDPGNGIANRVSALLSESVPEEPEQNKENIAFCTKIDEEFFKREVIMQQWGFKRLELLNFL.

Substrate-binding positions include 9–10 and 41–42; these read DS and YS. Catalysis depends on Cys73, which acts as the Proton donor/acceptor. Residue 74 to 75 participates in substrate binding; sequence NT. Cys184 serves as the catalytic Proton donor/acceptor. 185 to 186 provides a ligand contact to substrate; sequence TH.

The protein belongs to the aspartate/glutamate racemases family.

The enzyme catalyses L-glutamate = D-glutamate. It functions in the pathway cell wall biogenesis; peptidoglycan biosynthesis. Provides the (R)-glutamate required for cell wall biosynthesis. In Actinobacillus pleuropneumoniae serotype 3 (strain JL03), this protein is Glutamate racemase.